A 664-amino-acid polypeptide reads, in one-letter code: Protein-arginine deiminase type-3 (664 aa).

The protein belongs to the protein arginine deiminase family. Ca(2+) is required as a cofactor. In terms of tissue distribution, epidermis and hair follicles.

It localises to the cytoplasm. It carries out the reaction L-arginyl-[protein] + H2O = L-citrullyl-[protein] + NH4(+). Catalyzes the deimination of arginine residues of proteins. This chain is Protein-arginine deiminase type-3 (Padi3), found in Mus musculus (Mouse).